The sequence spans 247 residues: UDP-2,3-diacylglucosamine hydrolase (247 aa).

Residues Asp8, His10, Asp41, Asn79, and His114 each contribute to the Mn(2+) site. A substrate-binding site is contributed by 79-80; sequence NR. Substrate-binding residues include Asp122, Ser160, Asp171, Arg174, and His202. His202 and His204 together coordinate Mn(2+).

The protein belongs to the LpxH family. Mn(2+) is required as a cofactor.

It is found in the cell inner membrane. It carries out the reaction UDP-2-N,3-O-bis[(3R)-3-hydroxytetradecanoyl]-alpha-D-glucosamine + H2O = 2-N,3-O-bis[(3R)-3-hydroxytetradecanoyl]-alpha-D-glucosaminyl 1-phosphate + UMP + 2 H(+). It functions in the pathway glycolipid biosynthesis; lipid IV(A) biosynthesis; lipid IV(A) from (3R)-3-hydroxytetradecanoyl-[acyl-carrier-protein] and UDP-N-acetyl-alpha-D-glucosamine: step 4/6. Functionally, hydrolyzes the pyrophosphate bond of UDP-2,3-diacylglucosamine to yield 2,3-diacylglucosamine 1-phosphate (lipid X) and UMP by catalyzing the attack of water at the alpha-P atom. Involved in the biosynthesis of lipid A, a phosphorylated glycolipid that anchors the lipopolysaccharide to the outer membrane of the cell. The chain is UDP-2,3-diacylglucosamine hydrolase from Xanthomonas axonopodis pv. citri (strain 306).